The sequence spans 349 residues: tRNA pseudouridine synthase D (349 aa).

Phenylalanine 27 contacts substrate. Aspartate 80 serves as the catalytic Nucleophile. Asparagine 129 contributes to the substrate binding site. The 149-residue stretch at 155–303 folds into the TRUD domain; the sequence is GVPNYFGAQR…VEAARRAMLL (149 aa). Substrate is bound at residue phenylalanine 329.

This sequence belongs to the pseudouridine synthase TruD family.

The enzyme catalyses uridine(13) in tRNA = pseudouridine(13) in tRNA. Its function is as follows. Responsible for synthesis of pseudouridine from uracil-13 in transfer RNAs. In Escherichia coli (strain K12 / MC4100 / BW2952), this protein is tRNA pseudouridine synthase D.